We begin with the raw amino-acid sequence, 356 residues long: uncharacterized protein (356 aa).

A run of 6 helical transmembrane segments spans residues 2 to 22 (FEAIIYNISVMVAGIYLFHRL), 35 to 55 (EYVTVLMTFVSLLLAAYPIPF), 76 to 96 (NMIYTLTAAFIVSLVDVFIFG), 99 to 119 (IIYGITLIVIAGIVSAVGPFL), 124 to 144 (IISLLILNLISIIILLFLALL), and 151 to 171 (VEILVLIPISFIITIASAITF). One can recognise a GGDEF domain in the interval 218 to 353 (QSLALLLIDI…GRNKVMFNPI (136 aa)).

It is found in the cell membrane. This is an uncharacterized protein from Staphylococcus epidermidis (strain ATCC 35984 / DSM 28319 / BCRC 17069 / CCUG 31568 / BM 3577 / RP62A).